Reading from the N-terminus, the 94-residue chain is UPF0298 protein SEQ_1830 (94 aa).

Belongs to the UPF0298 family.

It is found in the cytoplasm. The sequence is that of UPF0298 protein SEQ_1830 from Streptococcus equi subsp. equi (strain 4047).